Reading from the N-terminus, the 500-residue chain is Lysine--tRNA ligase (500 aa).

Residues Glu-410 and Glu-417 each contribute to the Mg(2+) site.

This sequence belongs to the class-II aminoacyl-tRNA synthetase family. As to quaternary structure, homodimer. Mg(2+) serves as cofactor.

It is found in the cytoplasm. The catalysed reaction is tRNA(Lys) + L-lysine + ATP = L-lysyl-tRNA(Lys) + AMP + diphosphate. The sequence is that of Lysine--tRNA ligase from Shewanella putrefaciens (strain CN-32 / ATCC BAA-453).